Consider the following 244-residue polypeptide: Ferredoxin--NADP reductase B (244 aa).

The FAD-binding FR-type domain maps to 4–106 (AEPFEARLVA…VGPHGLFTRD (103 aa)). FAD contacts are provided by residues 55-58 (RAYS) and threonine 120.

Belongs to the ferredoxin--NADP reductase type 1 family. Requires FAD as cofactor.

The catalysed reaction is 2 reduced [4Fe-4S]-[ferredoxin] + NADP(+) + H(+) = 2 oxidized [4Fe-4S]-[ferredoxin] + NADPH. In terms of biological role, transports electrons between NADPH and ferredoxin. Can transfer electrons to ferredoxins Fdx2 and Fdx8. Prefers NADPH to NADH. The chain is Ferredoxin--NADP reductase B from Sorangium cellulosum (strain So ce56) (Polyangium cellulosum (strain So ce56)).